The following is an 85-amino-acid chain: Large ribosomal subunit protein bL31B (85 aa).

It belongs to the bacterial ribosomal protein bL31 family. Type B subfamily. In terms of assembly, part of the 50S ribosomal subunit.

This Porphyromonas gingivalis (strain ATCC 33277 / DSM 20709 / CIP 103683 / JCM 12257 / NCTC 11834 / 2561) protein is Large ribosomal subunit protein bL31B.